The sequence spans 222 residues: Peptide methionine sulfoxide reductase MsrA (222 aa).

C60 is an active-site residue.

The protein belongs to the MsrA Met sulfoxide reductase family.

The catalysed reaction is L-methionyl-[protein] + [thioredoxin]-disulfide + H2O = L-methionyl-(S)-S-oxide-[protein] + [thioredoxin]-dithiol. The enzyme catalyses [thioredoxin]-disulfide + L-methionine + H2O = L-methionine (S)-S-oxide + [thioredoxin]-dithiol. In terms of biological role, has an important function as a repair enzyme for proteins that have been inactivated by oxidation. Catalyzes the reversible oxidation-reduction of methionine sulfoxide in proteins to methionine. The polypeptide is Peptide methionine sulfoxide reductase MsrA (Pseudomonas putida (strain W619)).